The following is a 129-amino-acid chain: Protein RfbJ (129 aa).

The protein belongs to the glycosyltransferase 2 family.

The protein operates within bacterial outer membrane biogenesis; lipopolysaccharide biosynthesis. In Shigella flexneri, this protein is Protein RfbJ (rfbJ).